The chain runs to 372 residues: Alanine racemase (372 aa).

Lysine 35 acts as the Proton acceptor; specific for D-alanine in catalysis. Lysine 35 carries the post-translational modification N6-(pyridoxal phosphate)lysine. Arginine 143 is a binding site for substrate. The active-site Proton acceptor; specific for L-alanine is the tyrosine 268. Methionine 316 contributes to the substrate binding site.

The protein belongs to the alanine racemase family. Requires pyridoxal 5'-phosphate as cofactor.

It carries out the reaction L-alanine = D-alanine. Its pathway is amino-acid biosynthesis; D-alanine biosynthesis; D-alanine from L-alanine: step 1/1. Catalyzes the interconversion of L-alanine and D-alanine. May also act on other amino acids. This chain is Alanine racemase (alr), found in Shewanella frigidimarina (strain NCIMB 400).